Here is a 200-residue protein sequence, read N- to C-terminus: Trem-like transcript 4 protein (200 aa).

The signal sequence occupies residues 1 to 25 (MAWGGVHTCCFHLCCCCSWPQGAVP). Residues 26 to 126 (EELHKHPGQT…NIITVLRNIS (101 aa)) form the Ig-like V-type domain. A disulfide bridge connects residues Cys-40 and Cys-109. Residue Asn-93 is glycosylated (N-linked (GlcNAc...) asparagine).

It is found in the secreted. In terms of biological role, positively regulates Toll-like receptor TLR7 signaling in macrophages. This chain is Trem-like transcript 4 protein (TREML4), found in Homo sapiens (Human).